The chain runs to 120 residues: Adenosylhomocysteinase (120 aa).

Asn34 contacts NAD(+).

This sequence belongs to the adenosylhomocysteinase family. Requires NAD(+) as cofactor.

It localises to the cytoplasm. The catalysed reaction is S-adenosyl-L-homocysteine + H2O = L-homocysteine + adenosine. Its pathway is amino-acid biosynthesis; L-homocysteine biosynthesis; L-homocysteine from S-adenosyl-L-homocysteine: step 1/1. May play a key role in the regulation of the intracellular concentration of adenosylhomocysteine. In Streptomyces fradiae (Streptomyces roseoflavus), this protein is Adenosylhomocysteinase (ahcY).